The following is a 1407-amino-acid chain: DNA-directed RNA polymerase subunit beta' (1407 aa).

4 residues coordinate Zn(2+): Cys-70, Cys-72, Cys-85, and Cys-88. Mg(2+)-binding residues include Asp-460, Asp-462, and Asp-464. Zn(2+) contacts are provided by Cys-814, Cys-888, Cys-895, and Cys-898.

This sequence belongs to the RNA polymerase beta' chain family. As to quaternary structure, the RNAP catalytic core consists of 2 alpha, 1 beta, 1 beta' and 1 omega subunit. When a sigma factor is associated with the core the holoenzyme is formed, which can initiate transcription. Mg(2+) is required as a cofactor. Requires Zn(2+) as cofactor.

It carries out the reaction RNA(n) + a ribonucleoside 5'-triphosphate = RNA(n+1) + diphosphate. Functionally, DNA-dependent RNA polymerase catalyzes the transcription of DNA into RNA using the four ribonucleoside triphosphates as substrates. The polypeptide is DNA-directed RNA polymerase subunit beta' (Salmonella paratyphi B (strain ATCC BAA-1250 / SPB7)).